The following is a 149-amino-acid chain: Large ribosomal subunit protein bL9 (149 aa).

It belongs to the bacterial ribosomal protein bL9 family.

Its function is as follows. Binds to the 23S rRNA. The polypeptide is Large ribosomal subunit protein bL9 (Enterobacter sp. (strain 638)).